A 74-amino-acid chain; its full sequence is RNA-binding protein Hfq (74 aa).

The Sm domain maps to 9 to 69 (DQFLNQLRKE…ISTFMPQKNV (61 aa)).

It belongs to the Hfq family. Homohexamer.

Its function is as follows. RNA chaperone that binds small regulatory RNA (sRNAs) and mRNAs to facilitate mRNA translational regulation in response to envelope stress, environmental stress and changes in metabolite concentrations. Also binds with high specificity to tRNAs. The sequence is that of RNA-binding protein Hfq from Bacillus cytotoxicus (strain DSM 22905 / CIP 110041 / 391-98 / NVH 391-98).